The following is a 124-amino-acid chain: Small ribosomal subunit protein uS13 (124 aa).

Residues 89 to 124 (GRRHRQGLPVRGQRTKTNARTRKGPKRTVAGKKKAK) are disordered. The span at 101 to 124 (QRTKTNARTRKGPKRTVAGKKKAK) shows a compositional bias: basic residues.

It belongs to the universal ribosomal protein uS13 family. As to quaternary structure, part of the 30S ribosomal subunit. Forms a loose heterodimer with protein S19. Forms two bridges to the 50S subunit in the 70S ribosome.

Functionally, located at the top of the head of the 30S subunit, it contacts several helices of the 16S rRNA. In the 70S ribosome it contacts the 23S rRNA (bridge B1a) and protein L5 of the 50S subunit (bridge B1b), connecting the 2 subunits; these bridges are implicated in subunit movement. Contacts the tRNAs in the A and P-sites. This chain is Small ribosomal subunit protein uS13, found in Nocardioides sp. (strain ATCC BAA-499 / JS614).